Reading from the N-terminus, the 338-residue chain is Phosphate acyltransferase (338 aa).

The protein belongs to the PlsX family. Homodimer. Probably interacts with PlsY.

Its subcellular location is the cytoplasm. It catalyses the reaction a fatty acyl-[ACP] + phosphate = an acyl phosphate + holo-[ACP]. Its pathway is lipid metabolism; phospholipid metabolism. Its function is as follows. Catalyzes the reversible formation of acyl-phosphate (acyl-PO(4)) from acyl-[acyl-carrier-protein] (acyl-ACP). This enzyme utilizes acyl-ACP as fatty acyl donor, but not acyl-CoA. The protein is Phosphate acyltransferase of Salinibacter ruber (strain DSM 13855 / M31).